Reading from the N-terminus, the 209-residue chain is Large ribosomal subunit protein uL3 (209 aa).

Residues 127-152 (SGGPSSHGSKFHRHLGSTGQAATPSR) are disordered. Positions 143 to 152 (STGQAATPSR) are enriched in polar residues.

Belongs to the universal ribosomal protein uL3 family. As to quaternary structure, part of the 50S ribosomal subunit. Forms a cluster with proteins L14 and L19.

One of the primary rRNA binding proteins, it binds directly near the 3'-end of the 23S rRNA, where it nucleates assembly of the 50S subunit. The polypeptide is Large ribosomal subunit protein uL3 (Borrelia hermsii (strain HS1 / DAH)).